A 134-amino-acid chain; its full sequence is Small ribosomal subunit protein uS11 (134 aa).

It belongs to the universal ribosomal protein uS11 family. In terms of assembly, part of the 30S ribosomal subunit. Interacts with proteins S7 and S18. Binds to IF-3.

Located on the platform of the 30S subunit, it bridges several disparate RNA helices of the 16S rRNA. Forms part of the Shine-Dalgarno cleft in the 70S ribosome. The protein is Small ribosomal subunit protein uS11 of Polaromonas naphthalenivorans (strain CJ2).